The following is a 184-amino-acid chain: Type-1 fimbrial protein, A chain (184 aa).

The N-terminal stretch at 1–22 (MKHKLMTSTIASLMFVAGAAVA) is a signal peptide. C46 and C86 are joined by a disulfide.

The protein belongs to the fimbrial protein family.

It is found in the fimbrium. In terms of biological role, fimbriae (also called pili), polar filaments radiating from the surface of the bacterium to a length of 0.5-1.5 micrometers and numbering 100-300 per cell, enable bacteria to colonize the epithelium of specific host organs. The protein is Type-1 fimbrial protein, A chain (fimA) of Salmonella typhi.